A 211-amino-acid polypeptide reads, in one-letter code: uncharacterized protein (211 aa).

This is an uncharacterized protein from Dictyostelium discoideum (Social amoeba).